We begin with the raw amino-acid sequence, 272 residues long: Granaticin polyketide synthase putative ketoacyl reductase 1 (272 aa).

21–45 (LVTGATSGIGLAIARRLAALGARTF) serves as a coordination point for NAD(+). Ser-155 is a substrate binding site. Tyr-168 (proton acceptor) is an active-site residue.

Belongs to the short-chain dehydrogenases/reductases (SDR) family.

The protein operates within antibiotic biosynthesis; granaticin biosynthesis. This Streptomyces violaceoruber protein is Granaticin polyketide synthase putative ketoacyl reductase 1 (gra-orf5).